A 356-amino-acid chain; its full sequence is sn-glycerol-3-phosphate import ATP-binding protein UgpC (356 aa).

The region spanning 4–235 is the ABC transporter domain; that stretch reads LKLQAVTKSW…PASLFVASFI (232 aa). ATP is bound at residue 37 to 44; it reads GPSGCGKS.

Belongs to the ABC transporter superfamily. sn-glycerol-3-phosphate importer (TC 3.A.1.1.3) family. The complex is composed of two ATP-binding proteins (UgpC), two transmembrane proteins (UgpA and UgpE) and a solute-binding protein (UgpB).

The protein localises to the cell inner membrane. The enzyme catalyses sn-glycerol 3-phosphate(out) + ATP + H2O = sn-glycerol 3-phosphate(in) + ADP + phosphate + H(+). In terms of biological role, part of the ABC transporter complex UgpBAEC involved in sn-glycerol-3-phosphate (G3P) import. Responsible for energy coupling to the transport system. The chain is sn-glycerol-3-phosphate import ATP-binding protein UgpC from Shigella boydii serotype 4 (strain Sb227).